A 135-amino-acid chain; its full sequence is Putative pre-16S rRNA nuclease (135 aa).

It belongs to the YqgF nuclease family.

The protein resides in the cytoplasm. In terms of biological role, could be a nuclease involved in processing of the 5'-end of pre-16S rRNA. In Buchnera aphidicola subsp. Acyrthosiphon pisum (strain 5A), this protein is Putative pre-16S rRNA nuclease.